Reading from the N-terminus, the 425-residue chain is Glutamyl-tRNA reductase (425 aa).

Residues 49-52 (TCNR), S107, 112-114 (EPQ), and Q118 contribute to the substrate site. C50 serves as the catalytic Nucleophile. An NADP(+)-binding site is contributed by 187–192 (GAGETI).

It belongs to the glutamyl-tRNA reductase family. Homodimer.

It catalyses the reaction (S)-4-amino-5-oxopentanoate + tRNA(Glu) + NADP(+) = L-glutamyl-tRNA(Glu) + NADPH + H(+). It functions in the pathway porphyrin-containing compound metabolism; protoporphyrin-IX biosynthesis; 5-aminolevulinate from L-glutamyl-tRNA(Glu): step 1/2. In terms of biological role, catalyzes the NADPH-dependent reduction of glutamyl-tRNA(Glu) to glutamate 1-semialdehyde (GSA). In Pseudomonas putida (strain ATCC 47054 / DSM 6125 / CFBP 8728 / NCIMB 11950 / KT2440), this protein is Glutamyl-tRNA reductase.